The chain runs to 375 residues: Chlorophyll a/b light-harvesting protein PcbC (375 aa).

6 consecutive transmembrane segments (helical) span residues 40-60 (LLGA…SITV), 102-122 (YFVI…GGLF), 151-171 (LSLI…AFVA), 225-245 (IIGG…WHIL), 262-282 (AILS…GFFV), and 300-320 (GAAA…VWHA). The tract at residues 352–375 (ARTFIGRGKPQPEPPKKKGLFGRG) is disordered.

It belongs to the PsbB/PsbC family. IsiA/Pcb subfamily. The antenna complex consists of chlorophylls (a and b) and chlorophyll a/b binding proteins. Chlorophyll a serves as cofactor. The cofactor is chlorophyll b.

The protein resides in the cellular thylakoid membrane. Functionally, the antenna complex functions as a light receptor, it captures and delivers excitation energy to photosystems II and I. The Prochlorales pcb genes are not related to higher plant LHCs. In Prochlorothrix hollandica, this protein is Chlorophyll a/b light-harvesting protein PcbC (pcbC).